A 160-amino-acid polypeptide reads, in one-letter code: NADH-quinone oxidoreductase subunit I (160 aa).

4Fe-4S ferredoxin-type domains follow at residues 51-81 (LRRY…IEAA) and 91-120 (VRYD…EGPN). [4Fe-4S] cluster contacts are provided by C61, C64, C67, C71, C100, C103, C106, and C110.

This sequence belongs to the complex I 23 kDa subunit family. In terms of assembly, NDH-1 is composed of 14 different subunits. Subunits NuoA, H, J, K, L, M, N constitute the membrane sector of the complex. [4Fe-4S] cluster is required as a cofactor.

Its subcellular location is the cell inner membrane. It carries out the reaction a quinone + NADH + 5 H(+)(in) = a quinol + NAD(+) + 4 H(+)(out). Its function is as follows. NDH-1 shuttles electrons from NADH, via FMN and iron-sulfur (Fe-S) centers, to quinones in the respiratory chain. The immediate electron acceptor for the enzyme in this species is believed to be ubiquinone. Couples the redox reaction to proton translocation (for every two electrons transferred, four hydrogen ions are translocated across the cytoplasmic membrane), and thus conserves the redox energy in a proton gradient. In Anaplasma marginale (strain St. Maries), this protein is NADH-quinone oxidoreductase subunit I.